Here is a 421-residue protein sequence, read N- to C-terminus: Tryptophan synthase beta chain (421 aa).

Lysine 112 carries the N6-(pyridoxal phosphate)lysine modification.

It belongs to the TrpB family. In terms of assembly, tetramer of two alpha and two beta chains. Pyridoxal 5'-phosphate is required as a cofactor.

The enzyme catalyses (1S,2R)-1-C-(indol-3-yl)glycerol 3-phosphate + L-serine = D-glyceraldehyde 3-phosphate + L-tryptophan + H2O. It participates in amino-acid biosynthesis; L-tryptophan biosynthesis; L-tryptophan from chorismate: step 5/5. In terms of biological role, the beta subunit is responsible for the synthesis of L-tryptophan from indole and L-serine. This is Tryptophan synthase beta chain (trpB) from Mycobacterium bovis (strain ATCC BAA-935 / AF2122/97).